A 103-amino-acid polypeptide reads, in one-letter code: Pyrimidine/purine nucleoside phosphorylase (103 aa).

This sequence belongs to the nucleoside phosphorylase PpnP family.

The enzyme catalyses a purine D-ribonucleoside + phosphate = a purine nucleobase + alpha-D-ribose 1-phosphate. It catalyses the reaction adenosine + phosphate = alpha-D-ribose 1-phosphate + adenine. The catalysed reaction is cytidine + phosphate = cytosine + alpha-D-ribose 1-phosphate. It carries out the reaction guanosine + phosphate = alpha-D-ribose 1-phosphate + guanine. The enzyme catalyses inosine + phosphate = alpha-D-ribose 1-phosphate + hypoxanthine. It catalyses the reaction thymidine + phosphate = 2-deoxy-alpha-D-ribose 1-phosphate + thymine. The catalysed reaction is uridine + phosphate = alpha-D-ribose 1-phosphate + uracil. It carries out the reaction xanthosine + phosphate = alpha-D-ribose 1-phosphate + xanthine. Functionally, catalyzes the phosphorolysis of diverse nucleosides, yielding D-ribose 1-phosphate and the respective free bases. Can use uridine, adenosine, guanosine, cytidine, thymidine, inosine and xanthosine as substrates. Also catalyzes the reverse reactions. This chain is Pyrimidine/purine nucleoside phosphorylase, found in Shewanella baltica (strain OS155 / ATCC BAA-1091).